The chain runs to 670 residues: Transketolase, plasmid (670 aa).

His32 lines the substrate pocket. Residues His72 and 120 to 122 (GPL) each bind thiamine diphosphate. Asp161 provides a ligand contact to Mg(2+). Positions 162 and 191 each coordinate thiamine diphosphate. Residues Asn191 and Ile193 each coordinate Mg(2+). His267, Arg364, and Ser391 together coordinate substrate. Thiamine diphosphate is bound at residue His267. Catalysis depends on Glu417, which acts as the Proton donor. Phe443 lines the thiamine diphosphate pocket. His467, Asp475, and Arg526 together coordinate substrate.

This sequence belongs to the transketolase family. Homodimer. Mg(2+) is required as a cofactor. The cofactor is Ca(2+). It depends on Mn(2+) as a cofactor. Co(2+) serves as cofactor. Requires thiamine diphosphate as cofactor.

The enzyme catalyses D-sedoheptulose 7-phosphate + D-glyceraldehyde 3-phosphate = aldehydo-D-ribose 5-phosphate + D-xylulose 5-phosphate. The protein operates within carbohydrate biosynthesis; Calvin cycle. Its function is as follows. Catalyzes the transfer of a two-carbon ketol group from a ketose donor to an aldose acceptor, via a covalent intermediate with the cofactor thiamine pyrophosphate. The protein is Transketolase, plasmid (cbbTP) of Cupriavidus necator (strain ATCC 17699 / DSM 428 / KCTC 22496 / NCIMB 10442 / H16 / Stanier 337) (Ralstonia eutropha).